Here is a 148-residue protein sequence, read N- to C-terminus: Lysozyme C (148 aa).

Positions 1–18 are cleaved as a signal peptide; that stretch reads MKAVIILGLVLLSVTVQG. In terms of domain architecture, C-type lysozyme spans 19–148; it reads KIFERCELAR…VSQYVQGCGV (130 aa). Disulfide bonds link Cys24/Cys146, Cys48/Cys134, Cys83/Cys99, and Cys95/Cys113. Catalysis depends on residues Glu53 and Asp71.

The protein belongs to the glycosyl hydrolase 22 family. In terms of assembly, monomer.

The protein localises to the secreted. It carries out the reaction Hydrolysis of (1-&gt;4)-beta-linkages between N-acetylmuramic acid and N-acetyl-D-glucosamine residues in a peptidoglycan and between N-acetyl-D-glucosamine residues in chitodextrins.. In terms of biological role, lysozymes have primarily a bacteriolytic function; those in tissues and body fluids are associated with the monocyte-macrophage system and enhance the activity of immunoagents. The chain is Lysozyme C (LYZ) from Papio anubis (Olive baboon).